The chain runs to 332 residues: MTKITVFGMGSFGTALANVLAENGHTVLMWGKNEDSVKELNDHHQNKRYLKDVVLDSRIKATSDIKEAANFTDIYLMALPTKAMREVTSEIDSLIDSKKTFIHVAKGIENDTFKRVSEMIEDSISEDHNGGIGVLSGPSHAEEVVIKQPTTVAASSKDEKVSKLIQDLFMNDYLRVYTNNDLVGVELGGALKNIIAVASGIVAGMGYGDNAKAALMTRGLAEISRLGEKLGADPMTFLGLGGIGDLIVTCTSTHSRNYTLGFKLGQGQTMDEALNEMNMVVEGIYTTNSVYHLAKQQNVDMPITNALYKVLFEDNPVKDSVKDLMGRDKKSE.

Ser11, Phe12, Lys32, and Lys106 together coordinate NADPH. Positions 106, 137, and 139 each coordinate sn-glycerol 3-phosphate. NADPH is bound at residue Ala141. Positions 192, 245, 255, 256, and 257 each coordinate sn-glycerol 3-phosphate. The active-site Proton acceptor is Lys192. Arg256 serves as a coordination point for NADPH. NADPH contacts are provided by Val280 and Glu282.

This sequence belongs to the NAD-dependent glycerol-3-phosphate dehydrogenase family.

The protein localises to the cytoplasm. It catalyses the reaction sn-glycerol 3-phosphate + NAD(+) = dihydroxyacetone phosphate + NADH + H(+). The enzyme catalyses sn-glycerol 3-phosphate + NADP(+) = dihydroxyacetone phosphate + NADPH + H(+). It functions in the pathway membrane lipid metabolism; glycerophospholipid metabolism. Catalyzes the reduction of the glycolytic intermediate dihydroxyacetone phosphate (DHAP) to sn-glycerol 3-phosphate (G3P), the key precursor for phospholipid synthesis. The protein is Glycerol-3-phosphate dehydrogenase [NAD(P)+] of Staphylococcus haemolyticus (strain JCSC1435).